We begin with the raw amino-acid sequence, 130 residues long: Follitropin subunit beta (130 aa).

An N-terminal signal peptide occupies residues 1–20 (MMKLIQLCILFWCWRAICCH). Intrachain disulfides connect C22–C70, C36–C85, C39–C123, C47–C101, C51–C103, and C106–C113. Residues N26 and N43 are each glycosylated (N-linked (GlcNAc...) asparagine).

Belongs to the glycoprotein hormones subunit beta family. As to quaternary structure, heterodimer. The active follitropin is a heterodimer composed of an alpha chain/CGA shared with other hormones and a unique beta chain/FSHB shown here.

The protein localises to the secreted. Functionally, together with the alpha chain CGA constitutes follitropin, the follicle-stimulating hormone, and provides its biological specificity to the hormone heterodimer. Binds FSHR, a G protein-coupled receptor, on target cells to activate downstream signaling pathways. Follitropin is involved in follicle development and spermatogenesis in reproductive organs. This is Follitropin subunit beta (Fshb) from Mus musculus (Mouse).